Here is a 171-residue protein sequence, read N- to C-terminus: Calcium-binding allergen Ole e 8 (171 aa).

EF-hand domains are found at residues 16-51 (QEPN…LGSN), 52-87 (TSKE…ETDP), 92-127 (GGEN…LGER), and 128-163 (YAEH…KSGN). Ca(2+) contacts are provided by D29, N31, D33, K35, E40, D65, D67, D69, E76, D105, D107, N109, E116, D141, D143, D145, Y147, and E152.

In terms of assembly, homodimer. As to expression, expressed in pollen.

The sequence is that of Calcium-binding allergen Ole e 8 from Olea europaea (Common olive).